Here is a 207-residue protein sequence, read N- to C-terminus: MSRYRGPRLPIIRRLGELPGFSKKIDRNHTPPGQHGWKKKASDQKKSKESQYGIRLKEKQKLRYNYGINERQLINYVREARRRKGSTGEVLLQLLEMRLDNIIYRLGFAPTIPAARQLINHGHINVNNKNINIPSYICKINDIISVLKNSQQLIKNYLQNGGISELSTCLNLNKEKLEASINNIIPRDLVKLEINELLVIEYYSRKL.

The interval 20–52 (GFSKKIDRNHTPPGQHGWKKKASDQKKSKESQY) is disordered. Basic and acidic residues predominate over residues 40-52 (KASDQKKSKESQY). Residues 97–158 (MRLDNIIYRL…NSQQLIKNYL (62 aa)) form the S4 RNA-binding domain.

It belongs to the universal ribosomal protein uS4 family. As to quaternary structure, part of the 30S ribosomal subunit. Contacts protein S5. The interaction surface between S4 and S5 is involved in control of translational fidelity.

Its subcellular location is the plastid. Its function is as follows. One of the primary rRNA binding proteins, it binds directly to 16S rRNA where it nucleates assembly of the body of the 30S subunit. With S5 and S12 plays an important role in translational accuracy. The chain is Small ribosomal subunit protein uS4c (rps4) from Prototheca wickerhamii.